We begin with the raw amino-acid sequence, 500 residues long: Probable cytosol aminopeptidase (500 aa).

Mn(2+)-binding residues include Lys264 and Asp269. Lys276 is an active-site residue. The Mn(2+) site is built by Asp287, Asp346, and Glu348. The active site involves Arg350.

Belongs to the peptidase M17 family. Mn(2+) serves as cofactor.

Its subcellular location is the cytoplasm. The enzyme catalyses Release of an N-terminal amino acid, Xaa-|-Yaa-, in which Xaa is preferably Leu, but may be other amino acids including Pro although not Arg or Lys, and Yaa may be Pro. Amino acid amides and methyl esters are also readily hydrolyzed, but rates on arylamides are exceedingly low.. It catalyses the reaction Release of an N-terminal amino acid, preferentially leucine, but not glutamic or aspartic acids.. Its function is as follows. Presumably involved in the processing and regular turnover of intracellular proteins. Catalyzes the removal of unsubstituted N-terminal amino acids from various peptides. This Afipia carboxidovorans (strain ATCC 49405 / DSM 1227 / KCTC 32145 / OM5) (Oligotropha carboxidovorans) protein is Probable cytosol aminopeptidase.